A 368-amino-acid polypeptide reads, in one-letter code: F-box/kelch-repeat protein At2g44700 (368 aa).

Residues 1–23 form a disordered region; it reads MSSSNEPPRKTDQPSSSSASASA. Positions 14 to 23 are enriched in low complexity; that stretch reads PSSSSASASA. Residues 25–71 enclose the F-box domain; the sequence is PSLFLSLPLEIISMILARVPKRYYPILCSVSKNMRSLVRSPEIHKAR. The Kelch repeat unit spans residues 177-221; the sequence is KVYVIGGYQDDEIAAESFDLNTQTWEAAPIPDEKESHRWICKANV.

This Arabidopsis thaliana (Mouse-ear cress) protein is F-box/kelch-repeat protein At2g44700.